The primary structure comprises 2049 residues: MKPKKLQQGSDSAHTSDTESTKTCEKTAKKLPKTQKKLQKSKKTAKKRRDEEFRIFFPPPRVNPPIKTPFRLHNTNCEHRDWISDNLCLPKYASYQTGWRISHKSMKSLVLMDKRRAEWLKMHNLYRKSEIRKAIWTIERKGAKKLDEMPGNWRISREKRNSLDLQEFPIKIEQFPVKKREKTAKNWRKIAVLVCFKRKTTTKNRYLRRPKTKNQRKIEFRRPKTSKNRKLRLKIRPRVRFIDRKLIRRRECLVDPQNLISWIRRQEKAENLRIFQEKQKRLQEQQEDAEWEQIEAQRANSDDVIEDKSLKMEVLDIVKHKNRNWIVVEKKGCEIQGMEYLLVLESEFNEQQTVRYDRQNVDHKFRKMRDEKKEIVEFVSSLPFYKPKPPKINYPTNAGEYEEQEIELERRRLEEEERDQNDKKLEIEDRNHFKKWQKRRNLIKIYRNSIRREIWRRRRGRNSTENSDSESSSEASEPPDDVITKEEPTDFSEENLVKKEEICDDFEHKIEEDVKPDVYKLNINKMISPPSPPPKKGILLKKDTKKRGEKRVKTVQFKLTKRQKLAKLWKPPTWQIRQILRAAADAKGYKIRSGRSRYNEKIRRLNHFNGQKLGFKSAPTRIDTFEKGIDVREQPIPFVEEFVLDDHALLTFASFDDLKAYEEAYSLRQQDVIDEFWRHQCLKNIESFEKDDVERAEMRHEIEKLETEMRCQKMNENAEIDQENIESFETAGRQIENIIKNTGDCAFETLEEYFSISADFEKNEELRAEEEQLEIEMEHWERELEEMIDVIKREFSIENLMMRMLKNRHLLTMRLVVSGTNQSSIDRENLLRKTKKLLEELKNLRIAAQNRLKIDFDRNERMLYRLRNAKQKAAKRARKLVKNWKKSAQNKSGVLKINGNHVINHDVVVKKWKVELKIEGNGESPRKVVRKAKETSGYWDFRWNFTKFAWKSDVLKRKQRFGKHSARRAIAFGVKIEEIHSETEFEKLLSEYVEYEESDIQNQVSIDRKIDIITKIKTITLNDVRAKAIEMQKQIVEKAVDLMIKSRLDEAAREHQEWLQSDECKRENQLRQRQQNFFDLTSSSPATSSFVTTQVVVPRLTHLEERLIELGVEHEVVQHTQRLQSEFENYHHLQQQHNHQNFQQQQQGNHDFVTPKAPQDKQKRKYTKRKALLNTAVASSSDQNGMKSPGSSAMENAAAAAQAAQAQAQATIPTPTVNLPDVVAIAAAAATAQPSAAAAKRPASETPPNGLPKVPRHDEQQQQQNNAHSIVMGAREGFLAMNPSLAGHVFPASSASTSGAPGAHSATTSGGAGLIGISAATQAQLQAQQAAQAAAAAAAAAAAQATQSLYINTSVAPGAQAASAQGGGGGQVVAAQQSNQAATAEAIRLLQGLPPFLTAGSGSAGIPYFSALSQQLNQLGAAAPGAPGTLNGLQFPANAALGPQLAGAALLAAVPGAQQQIKRPGRWSGMHVKIATDIQNYKQSQEKKLPTDIQSTSSSSAAPASAPAPRAGAGAGATSSSAASSSTSTPSSSSHHKKSSPPHHQKSAAPSAPPRDVTSAHAPPPPASSAPIVGAPRQGATPQAAPATTPATTSQHQQSIQFSQFPPPQLSGGAAYAGNPQLMAAAINEATRRVAATPKPPVVRPPSAATQQQPVSVTSQASQQQQQFQQIQQQRAAAIAAAAAATSQQAPPAQASQATSAAQQIATSMGLQPAQVTDLVNQHAQQYLLLQQQQQQQQREQQQQQQLQAQQVQQQLIAHLLGGGHQAQQAAPAVSVAQQQQQQVAAAAAAQQQHNAQLQNIMILTALQQQMERGAAAGAAASLPYQLQLAQAQAQAQAQQAPPTSQPSQAATPQQQQQLDLIRQMEAVAQVQQAHAQAQAQAQAQAQQMQQQQIQQMLMAGQGGPNGQDLIRLLQAAQQQSQAQQQQQQQQAVVAAAQQQQQQQQHNQQLAAAQAAAAAAAAGRPTQNQYEALLQQQRLLAAQQQAAAGASAQQQAAAAAAQAQAQQFQQQLLGLQPNLLLAQVQQAQQAQAQAQAQAQQKPPQMPNGR.

A disordered region spans residues 1–58 (MKPKKLQQGSDSAHTSDTESTKTCEKTAKKLPKTQKKLQKSKKTAKKRRDEEFRIFFP). The sufficient to prevent linker cell death stretch occupies residues 1–1601 (MKPKKLQQGS…TTSQHQQSIQ (1601 aa)). The segment covering 14–28 (HTSDTESTKTCEKTA) has biased composition (basic and acidic residues). A compositionally biased stretch (basic residues) spans 29 to 47 (KKLPKTQKKLQKSKKTAKK). Coiled coils occupy residues 264 to 302 (RRQE…ANSD) and 396 to 432 (TNAG…DRNH). The segment at 459-492 (RGRNSTENSDSESSSEASEPPDDVITKEEPTDFS) is disordered. Residues 463-476 (STENSDSESSSEAS) are compositionally biased toward low complexity. Coiled-coil stretches lie at residues 686-730 (ESFE…SFET), 756-796 (ISAD…REFS), and 822-880 (QSSI…ARKL). Low complexity predominate over residues 1134–1150 (QQQHNHQNFQQQQQGNH). Disordered stretches follow at residues 1134–1198 (QQQH…ENAA), 1236–1265 (AAAA…QQQN), 1481–1616 (YKQS…GAAY), and 1636–1661 (ATPK…TSQA). Basic residues predominate over residues 1162–1171 (QKRKYTKRKA). Over residues 1176-1194 (AVASSSDQNGMKSPGSSAM) the composition is skewed to polar residues. Low complexity predominate over residues 1495–1533 (STSSSSAAPASAPAPRAGAGAGATSSSAASSSTSTPSSS). Residues 1534-1546 (SHHKKSSPPHHQK) are compositionally biased toward basic residues. 2 stretches are compositionally biased toward low complexity: residues 1569-1604 (SAPI…QFSQ) and 1649-1661 (ATQQ…TSQA). Coiled-coil stretches lie at residues 1659–1685 (SQAS…AAAA) and 1725–1801 (QQYL…LQNI). Residues 1836–1858 (AQAQQAPPTSQPSQAATPQQQQQ) form a disordered region. Coiled-coil stretches lie at residues 1863-1961 (RQME…AAAA) and 1991-2041 (SAQQ…AQQK).

As to expression, expressed in the linker cell just before it dies.

The protein localises to the cytoplasm. In males, required for non-apoptotic death of the linker cell once it has finished guiding gonad elongation at the end of larval development. May be involved in nuclear envelope crenellation in the linker cell. Functionally, in males, promotes linker cell survival. This Caenorhabditis elegans protein is Polyglutamine-repeat protein pqn-41.